The following is a 237-amino-acid chain: 1-(5-phosphoribosyl)-5-[(5-phosphoribosylamino)methylideneamino] imidazole-4-carboxamide isomerase (237 aa).

Asp-8 (proton acceptor) is an active-site residue. Asp-129 acts as the Proton donor in catalysis.

The protein belongs to the HisA/HisF family.

Its subcellular location is the cytoplasm. It catalyses the reaction 1-(5-phospho-beta-D-ribosyl)-5-[(5-phospho-beta-D-ribosylamino)methylideneamino]imidazole-4-carboxamide = 5-[(5-phospho-1-deoxy-D-ribulos-1-ylimino)methylamino]-1-(5-phospho-beta-D-ribosyl)imidazole-4-carboxamide. It participates in amino-acid biosynthesis; L-histidine biosynthesis; L-histidine from 5-phospho-alpha-D-ribose 1-diphosphate: step 4/9. The chain is 1-(5-phosphoribosyl)-5-[(5-phosphoribosylamino)methylideneamino] imidazole-4-carboxamide isomerase from Methanosphaera stadtmanae (strain ATCC 43021 / DSM 3091 / JCM 11832 / MCB-3).